An 88-amino-acid polypeptide reads, in one-letter code: uncharacterized protein (88 aa).

This is an uncharacterized protein from Orgyia pseudotsugata (Douglas-fir tussock moth).